The primary structure comprises 588 residues: Sulfite reductase [NADPH] hemoprotein beta-component (588 aa).

[4Fe-4S] cluster contacts are provided by Cys-442, Cys-448, Cys-487, and Cys-491. Position 491 (Cys-491) interacts with siroheme.

This sequence belongs to the nitrite and sulfite reductase 4Fe-4S domain family. Alpha(8)-beta(8). The alpha component is a flavoprotein, the beta component is a hemoprotein. It depends on siroheme as a cofactor. The cofactor is [4Fe-4S] cluster.

The enzyme catalyses hydrogen sulfide + 3 NADP(+) + 3 H2O = sulfite + 3 NADPH + 4 H(+). It participates in sulfur metabolism; hydrogen sulfide biosynthesis; hydrogen sulfide from sulfite (NADPH route): step 1/1. Functionally, component of the sulfite reductase complex that catalyzes the 6-electron reduction of sulfite to sulfide. This is one of several activities required for the biosynthesis of L-cysteine from sulfate. This chain is Sulfite reductase [NADPH] hemoprotein beta-component, found in Actinobacillus pleuropneumoniae serotype 3 (strain JL03).